Consider the following 432-residue polypeptide: Ribosomal protein uS12 methylthiotransferase RimO (432 aa).

The 117-residue stretch at 4–120 (HNVFLLSLGC…LLQAIGAQYR (117 aa)) folds into the MTTase N-terminal domain. Residues Cys-13, Cys-49, Cys-83, Cys-144, Cys-148, and Cys-151 each contribute to the [4Fe-4S] cluster site. One can recognise a Radical SAM core domain in the interval 130-359 (LTPPHISYLK…MELQETIAKE (230 aa)). Positions 362-429 (QLFEGKELTV…AYELHGTITA (68 aa)) constitute a TRAM domain.

Belongs to the methylthiotransferase family. RimO subfamily. It depends on [4Fe-4S] cluster as a cofactor.

Its subcellular location is the cytoplasm. It catalyses the reaction L-aspartate(89)-[ribosomal protein uS12]-hydrogen + (sulfur carrier)-SH + AH2 + 2 S-adenosyl-L-methionine = 3-methylsulfanyl-L-aspartate(89)-[ribosomal protein uS12]-hydrogen + (sulfur carrier)-H + 5'-deoxyadenosine + L-methionine + A + S-adenosyl-L-homocysteine + 2 H(+). Functionally, catalyzes the methylthiolation of an aspartic acid residue of ribosomal protein uS12. The sequence is that of Ribosomal protein uS12 methylthiotransferase RimO from Chlorobium phaeobacteroides (strain DSM 266 / SMG 266 / 2430).